Reading from the N-terminus, the 485-residue chain is Bifunctional protein HldE (485 aa).

Residues 1 to 326 are ribokinase; sequence MDFSSTRVLC…AELDESAISN (326 aa). ATP is bound at residue 195-198; sequence NVKE. Residue Asp271 is part of the active site. The segment at 354 to 485 is cytidylyltransferase; the sequence is FTNGCFDILH…GIVKKISTLT (132 aa).

In the N-terminal section; belongs to the carbohydrate kinase PfkB family. This sequence in the C-terminal section; belongs to the cytidylyltransferase family. Homodimer.

It catalyses the reaction D-glycero-beta-D-manno-heptose 7-phosphate + ATP = D-glycero-beta-D-manno-heptose 1,7-bisphosphate + ADP + H(+). The catalysed reaction is D-glycero-beta-D-manno-heptose 1-phosphate + ATP + H(+) = ADP-D-glycero-beta-D-manno-heptose + diphosphate. It functions in the pathway nucleotide-sugar biosynthesis; ADP-L-glycero-beta-D-manno-heptose biosynthesis; ADP-L-glycero-beta-D-manno-heptose from D-glycero-beta-D-manno-heptose 7-phosphate: step 1/4. It participates in nucleotide-sugar biosynthesis; ADP-L-glycero-beta-D-manno-heptose biosynthesis; ADP-L-glycero-beta-D-manno-heptose from D-glycero-beta-D-manno-heptose 7-phosphate: step 3/4. Its function is as follows. Catalyzes the phosphorylation of D-glycero-D-manno-heptose 7-phosphate at the C-1 position to selectively form D-glycero-beta-D-manno-heptose-1,7-bisphosphate. Functionally, catalyzes the ADP transfer from ATP to D-glycero-beta-D-manno-heptose 1-phosphate, yielding ADP-D-glycero-beta-D-manno-heptose. This chain is Bifunctional protein HldE, found in Granulibacter bethesdensis (strain ATCC BAA-1260 / CGDNIH1).